Here is a 432-residue protein sequence, read N- to C-terminus: Adenylosuccinate synthetase (432 aa).

GTP contacts are provided by residues 13–19 and 41–43; these read GDEGKGK and GHT. D14 (proton acceptor) is an active-site residue. Mg(2+) is bound by residues D14 and G41. Residues 14–17, 39–42, T130, R144, Q225, T240, and R304 contribute to the IMP site; these read DEGK and NAGH. H42 acts as the Proton donor in catalysis. 300–306 provides a ligand contact to substrate; the sequence is ATTGRRR. Residues R306, 332-334, and 415-417 contribute to the GTP site; these read KLD and STG.

It belongs to the adenylosuccinate synthetase family. As to quaternary structure, homodimer. It depends on Mg(2+) as a cofactor.

It is found in the cytoplasm. It catalyses the reaction IMP + L-aspartate + GTP = N(6)-(1,2-dicarboxyethyl)-AMP + GDP + phosphate + 2 H(+). Its pathway is purine metabolism; AMP biosynthesis via de novo pathway; AMP from IMP: step 1/2. Its function is as follows. Plays an important role in the de novo pathway of purine nucleotide biosynthesis. Catalyzes the first committed step in the biosynthesis of AMP from IMP. In Edwardsiella ictaluri (strain 93-146), this protein is Adenylosuccinate synthetase.